We begin with the raw amino-acid sequence, 417 residues long: Queuine tRNA-ribosyltransferase accessory subunit 2 (417 aa).

Zn(2+) contacts are provided by Cys-324, Cys-326, Cys-329, and His-355.

The protein belongs to the queuine tRNA-ribosyltransferase family. QTRT2 subfamily. Heterodimer of a catalytic subunit and an accessory subunit. Zn(2+) is required as a cofactor.

Its subcellular location is the cytoplasm. Non-catalytic subunit of the queuine tRNA-ribosyltransferase (TGT) that catalyzes the base-exchange of a guanine (G) residue with queuine (Q) at position 34 (anticodon wobble position) in tRNAs with GU(N) anticodons (tRNA-Asp, -Asn, -His and -Tyr), resulting in the hypermodified nucleoside queuosine (7-(((4,5-cis-dihydroxy-2-cyclopenten-1-yl)amino)methyl)-7-deazaguanosine). The polypeptide is Queuine tRNA-ribosyltransferase accessory subunit 2 (Drosophila persimilis (Fruit fly)).